A 511-amino-acid polypeptide reads, in one-letter code: mRNA export factor (511 aa).

Residues 1–15 (MATDIDMLIDLGLDL) are compositionally biased toward low complexity. Positions 1–244 (MATDIDMLID…ERKAPAADTI (244 aa)) are disordered. Residues 5 to 17 (IDMLIDLGLDLSD) carry the Nuclear export signal motif. Residues S16 and S18 each carry the phosphoserine; by host modification. Composition is skewed to acidic residues over residues 16–26 (SDSDLDEDPPE) and 35–51 (LESD…EDME). Residues 104–112 (VWSRLGARR) are interaction with host ALYREF. A Nuclear localization signal motif is present at residues 110-138 (ARRPSCSPEQHGGKVARLQPPPTKAQPAR). S114 is modified (phosphoserine; by host). Residue R138 is modified to Dimethylated arginine; by host. The interval 138–152 (RGGRRGRRRGRGRGG) is RGG-box. Residues 139-149 (GGRRGRRRGRG) show a composition bias toward basic residues. R148 is modified (omega-N-methylarginine; by host). The residue at position 150 (R150) is a Dimethylated arginine; by host. Positions 213 to 232 (APPPLMTLAIAPPPADPRAP) are enriched in pro residues. Positions 399, 478, 482, and 487 each coordinate Zn(2+). A CHC2-type zinc finger spans residues 399-487 (CYLKARGLCG…HRQECSSRVC (89 aa)).

This sequence belongs to the HHV-1 ICP27 protein family. As to quaternary structure, interacts with host RBP1; this interaction facilitates the RNA polymerase recruitment to viral transcription sites. Interacts (via the RGG box) with host ALYREF/THOC4; this interaction recruits ALYREF to viral replication compartments and probably directs viral mRNA to the TAP/NFX1 pathway. Interacts (via the RGG box) with host SRPK1; this interaction relocalizes SRPK1 to the nucleus and seems to alter its activity. Interacts with ICP4; this interaction modulates ICP4 DNA-binding activity. Interacts with host NXF1; this interaction allows efficient export of HSV-1 early and late transcripts. Methylated within the RGG box possibly by host PRMT1. When hypomethylated, ICP27 is exported to the cytoplasm earlier and more rapidly. Post-translationally, phosphorylated.

It is found in the host cytoplasm. Its subcellular location is the host nucleus. In terms of biological role, multifunctional regulator of the expression of viral genes that contributes to the shutoff of host protein synthesis and mediates nuclear export of viral intronless mRNAs. Early in infection, this immediate early (EI) protein mediates the inhibition of cellular splicing. This results in the accumulation of unprocessed 3'end pre-mRNAs which can't be exported from the nucleus. Cellular protein synthesis is thereby shut off early after virus infection. Later in the infection, it helps recruit cellular RNA polymerase II to viral replication sites and promotes the nuclear export of viral intronless mRNAs by interacting with mRNAs and host NXF1/TAP. ICP27 binds to NUP62 which may provide facilitated viral mRNA export and may compete with some host cell transport receptors for binding and inhibit cellular nucleocytoplasmic transport pathways. Also stimulates translation of viral transcripts. Repression of host gene expression blocks the cell cycle at the G1 phase and prevents apoptosis. Seems to silence the 3' splice site of the promyelocytic leukemia (PML) intron 7a, thereby switching PML isoforms from PML-II to PML-V. This could be linked to the accelerated mRNA export induced by ICP27 which might not provide sufficient time for PML pre-mRNA to be spliced in the nucleus. This is mRNA export factor from Human herpesvirus 1 (strain HFEM) (HHV-1).